The sequence spans 323 residues: Mas-related G-protein coupled receptor member B4 (323 aa).

At 1-34 (MSPTTQAWSINNTVVKENYYTEILSCITTFNTLN) the chain is on the extracellular side. N-linked (GlcNAc...) asparagine glycosylation is present at asparagine 11. Residues 35-55 (FLIVIISVVGMAGNATVLWLL) form a helical membrane-spanning segment. The Cytoplasmic segment spans residues 56–63 (GFHMHRNA). A helical transmembrane segment spans residues 64 to 84 (FSVYVLNLAGADFLYLCAQTV). Residues 85–98 (YSLECVLQFDNSYF) lie on the Extracellular side of the membrane. Residues 99-119 (YFLLTILMFNYLAGFCMIAAI) form a helical membrane-spanning segment. The Cytoplasmic portion of the chain corresponds to 120-147 (STERCLSVTWPIWYHCQRPRHTSATVCA). A helical membrane pass occupies residues 148 to 168 (LFWAFSLLLSLLLGQGCGFLF). At 169–180 (SKFDYSFCRYCN) the chain is on the extracellular side. The chain crosses the membrane as a helical span at residues 181 to 201 (FIATAFLIVIFMVLFVSSLAL). Topologically, residues 202–224 (LAKIICGSHRIPVTRFYVTIALT) are cytoplasmic. The chain crosses the membrane as a helical span at residues 225–245 (VLVFIFFGLPIGICVFLLPWI). The Extracellular segment spans residues 246-255 (HMMLSSFFYE). A helical membrane pass occupies residues 256–276 (MVTLLSCVNSCANPIIYFFVG). The Cytoplasmic segment spans residues 277-323 (SIRHHRLQRQTLKLLLQRAMQDTPEEEGGERGPSQKSEDLEVVRCSS). The tract at residues 298-323 (DTPEEEGGERGPSQKSEDLEVVRCSS) is disordered. Positions 312–323 (KSEDLEVVRCSS) are enriched in basic and acidic residues.

Belongs to the G-protein coupled receptor 1 family. Mas subfamily. In terms of tissue distribution, expressed strongly in newborn dorsal root ganglia, adult dorsal root ganglia and trigeminal ganlia.

It is found in the membrane. In terms of biological role, orphan receptor. Probably involved in the function of nociceptive neurons. May regulate nociceptor function and/or development, including the sensation or modulation of pain. The chain is Mas-related G-protein coupled receptor member B4 (Mrgprb4) from Rattus norvegicus (Rat).